The chain runs to 97 residues: Defensin-like protein 245 (97 aa).

Residues 1-24 (MKFAAILLVTCVLFSLLPSHLSQG) form the signal peptide. 4 disulfides stabilise this stretch: Cys39/Cys96, Cys50/Cys79, Cys58/Cys89, and Cys77/Cys91.

It belongs to the DEFL family. Flower buds and roots.

It is found in the secreted. This is Defensin-like protein 245 (SCRL4) from Arabidopsis thaliana (Mouse-ear cress).